Consider the following 314-residue polypeptide: Protein translocase subunit SecF (314 aa).

Transmembrane regions (helical) follow at residues 17-37, 137-157, 158-178, 188-210, 250-270, and 272-292; these read AVAVSAILVAIALISMGTRGL, QGTYAILYALLAIVAYIWWRY, ELNFGVAAVIALVHDVVITLG, SLPVLAAILTVIGYSLNDTIVVF, TLIVVAVLYFFGGEVINGFAF, and LLVGIIVGTYSSIFVASLLLV.

Belongs to the SecD/SecF family. SecF subfamily. In terms of assembly, forms a complex with SecD. Part of the essential Sec protein translocation apparatus which comprises SecA, SecYEG and auxiliary proteins SecDF. Other proteins may also be involved.

The protein resides in the cell inner membrane. Functionally, part of the Sec protein translocase complex. Interacts with the SecYEG preprotein conducting channel. SecDF uses the proton motive force (PMF) to complete protein translocation after the ATP-dependent function of SecA. This is Protein translocase subunit SecF from Desulfurispirillum indicum (strain ATCC BAA-1389 / DSM 22839 / S5).